We begin with the raw amino-acid sequence, 364 residues long: Aminomethyltransferase (364 aa).

It belongs to the GcvT family. As to quaternary structure, the glycine cleavage system is composed of four proteins: P, T, L and H.

The catalysed reaction is N(6)-[(R)-S(8)-aminomethyldihydrolipoyl]-L-lysyl-[protein] + (6S)-5,6,7,8-tetrahydrofolate = N(6)-[(R)-dihydrolipoyl]-L-lysyl-[protein] + (6R)-5,10-methylene-5,6,7,8-tetrahydrofolate + NH4(+). Its function is as follows. The glycine cleavage system catalyzes the degradation of glycine. The sequence is that of Aminomethyltransferase from Shewanella pealeana (strain ATCC 700345 / ANG-SQ1).